The chain runs to 61 residues: Small ribosomal subunit protein uS14 (61 aa).

Zn(2+) is bound by residues cysteine 24, cysteine 27, cysteine 40, and cysteine 43.

The protein belongs to the universal ribosomal protein uS14 family. Zinc-binding uS14 subfamily. As to quaternary structure, part of the 30S ribosomal subunit. Contacts proteins S3 and S10. Zn(2+) is required as a cofactor.

Functionally, binds 16S rRNA, required for the assembly of 30S particles and may also be responsible for determining the conformation of the 16S rRNA at the A site. This chain is Small ribosomal subunit protein uS14, found in Deinococcus geothermalis (strain DSM 11300 / CIP 105573 / AG-3a).